A 29-amino-acid chain; its full sequence is Cytochrome b6-f complex subunit 8 (29 aa).

The chain crosses the membrane as a helical span at residues 3–23; it reads IVDIAWAALMVVFTFSLSLVV.

Belongs to the PetN family. The 4 large subunits of the cytochrome b6-f complex are cytochrome b6, subunit IV (17 kDa polypeptide, PetD), cytochrome f and the Rieske protein, while the 4 small subunits are PetG, PetL, PetM and PetN. The complex functions as a dimer.

Its subcellular location is the plastid. It is found in the chloroplast thylakoid membrane. In terms of biological role, component of the cytochrome b6-f complex, which mediates electron transfer between photosystem II (PSII) and photosystem I (PSI), cyclic electron flow around PSI, and state transitions. This is Cytochrome b6-f complex subunit 8 from Gnetum parvifolium (Small-leaved jointfir).